Here is a 78-residue protein sequence, read N- to C-terminus: Acyl carrier protein (78 aa).

The Carrier domain occupies 2–77; that stretch reads SDIAERVKKI…DAIKFLEKNA (76 aa). Ser-37 carries the O-(pantetheine 4'-phosphoryl)serine modification.

This sequence belongs to the acyl carrier protein (ACP) family. 4'-phosphopantetheine is transferred from CoA to a specific serine of apo-ACP by AcpS. This modification is essential for activity because fatty acids are bound in thioester linkage to the sulfhydryl of the prosthetic group.

The protein localises to the cytoplasm. Its pathway is lipid metabolism; fatty acid biosynthesis. Functionally, carrier of the growing fatty acid chain in fatty acid biosynthesis. The polypeptide is Acyl carrier protein (Xanthobacter autotrophicus (strain ATCC BAA-1158 / Py2)).